The following is a 198-amino-acid chain: Type 1 fimbriae regulatory protein FimE (198 aa).

In terms of domain architecture, Tyr recombinase spans 2 to 184 (SKRRYLTGKE…NAARFAGLWE (183 aa)). Residues Arg-41, Lys-66, His-136, Arg-139, and His-162 contribute to the active site. Tyr-171 acts as the O-(3'-phospho-DNA)-tyrosine intermediate in catalysis.

This sequence belongs to the 'phage' integrase family.

FimE is one of the 2 regulatory proteins which control the phase variation of type 1 fimbriae in E.coli. These proteins mediate the periodic inversion of a 300bp DNA segment that harbors the promoter for the fimbrial structural gene, fimA. FimE switches fimA off. This Escherichia coli O6:H1 (strain CFT073 / ATCC 700928 / UPEC) protein is Type 1 fimbriae regulatory protein FimE (fimE).